The primary structure comprises 347 residues: E3 ubiquitin-protein ligase ARK2C (347 aa).

Disordered stretches follow at residues 23–79 (PFQR…GTLH) and 268–289 (PHKY…GEES). The ubiquitin binding stretch occupies residues 267–269 (FPH). Residues 276 to 285 (PQDSKGKKDE) show a composition bias toward basic and acidic residues. Residues C295 and C298 each contribute to the Zn(2+) site. The RING-type; atypical zinc-finger motif lies at 295 to 336 (CTICLSMLEDGEDVRRLPCMHLFHQLCVDQWLAMSKKCPICR). A ubiquitin binding region spans residues 310–314 (RLPCM). H318 and C321 together coordinate Zn(2+).

This sequence belongs to the Arkadia family. As to quaternary structure, monomer; binding to the ubiquitin-conjugating enzyme E2 does not trigger homodimerization. In terms of tissue distribution, expressed in neurons of the nervous system.

It is found in the nucleus. The catalysed reaction is S-ubiquitinyl-[E2 ubiquitin-conjugating enzyme]-L-cysteine + [acceptor protein]-L-lysine = [E2 ubiquitin-conjugating enzyme]-L-cysteine + N(6)-ubiquitinyl-[acceptor protein]-L-lysine.. Binds free ubiquitin non-covalently via its RING-type zinc finger. Ubiquitin-binding leads to enhance the E3 ubiquitin-protein ligase activity by stabilizing the ubiquitin-conjugating enzyme E2 (donor ubiquitin) in the 'closed' conformation and activating ubiquitin transfer. Its function is as follows. E3 ubiquitin-protein ligase that acts as a regulator of motor axon elongation. Required for efficient motor axon extension in the dorsal forelimb by enhancing the transcriptional responses of the SMAD1/SMAD5/SMAD8 effectors, which are activated downstream of BMP. Acts by mediating ubiquitination and degradation of SMAD inhibitors such as SMAD6, SMAD7, SKI and SNON isoform of SKIL. The sequence is that of E3 ubiquitin-protein ligase ARK2C from Mus musculus (Mouse).